The chain runs to 225 residues: Mitochondrial inner membrane protease ATP23 (225 aa).

H124 lines the a divalent metal cation pocket. Residue E125 is part of the active site. H128 contacts a divalent metal cation.

It belongs to the peptidase M76 family.

The protein localises to the mitochondrion inner membrane. Functionally, has a dual role in the assembly of mitochondrial ATPase. Acts as a protease that removes N-terminal residues of mitochondrial ATPase CF(0) subunit 6 at the intermembrane space side. Also involved in the correct assembly of the membrane-embedded ATPase CF(0) particle, probably mediating association of subunit 6 with the subunit 9 ring. The sequence is that of Mitochondrial inner membrane protease ATP23 (ATP23) from Candida glabrata (strain ATCC 2001 / BCRC 20586 / JCM 3761 / NBRC 0622 / NRRL Y-65 / CBS 138) (Yeast).